The primary structure comprises 72 residues: Multiple antibiotic resistance protein MarB (72 aa).

The chain is Multiple antibiotic resistance protein MarB (marB) from Escherichia coli (strain K12).